A 322-amino-acid polypeptide reads, in one-letter code: Adenine deaminase (322 aa).

Residues H11, H13, and H189 each coordinate Zn(2+). E192 acts as the Proton donor in catalysis. D270 provides a ligand contact to Zn(2+). D271 provides a ligand contact to substrate.

It belongs to the metallo-dependent hydrolases superfamily. Adenosine and AMP deaminases family. Adenine deaminase type 2 subfamily. It depends on Zn(2+) as a cofactor.

The catalysed reaction is adenine + H2O + H(+) = hypoxanthine + NH4(+). Catalyzes the hydrolytic deamination of adenine to hypoxanthine. Plays an important role in the purine salvage pathway and in nitrogen catabolism. The chain is Adenine deaminase from Rhizobium rhizogenes (strain K84 / ATCC BAA-868) (Agrobacterium radiobacter).